Here is a 438-residue protein sequence, read N- to C-terminus: RNA polymerase sigma factor SigA (438 aa).

Basic residues predominate over residues 1–11 (MKKSKSKKKAA). A disordered region spans residues 1–69 (MKKSKSKKKA…PLDLEGPLEA (69 aa)). Over residues 12 to 26 (KAQEVEVKEPVKEPE) the composition is skewed to basic and acidic residues. 2 stretches are compositionally biased toward acidic residues: residues 27-45 (PLPE…EPDP) and 52-69 (PELE…PLEA). Positions 93 to 128 (SDPVRQYLHEIGQVPLLTLEEEIDLARKVEEGMEAI) are sigma-70 factor domain-1. The sigma-70 factor domain-2 stretch occupies residues 202 to 272 (LIEANLRLVV…NRAIADQART (71 aa)). The short motif at 226 to 229 (DLIQ) is the Interaction with polymerase core subunit RpoC element. A sigma-70 factor domain-3 region spans residues 281–359 (ETINKLSRTA…DENLPSPVEA (79 aa)). The interval 372-424 (ALSKLSEREAMVLKLRKGLIDGREHTLEEVGAYFGVTRERIRQIENKALRKLK) is sigma-70 factor domain-4. Positions 398–417 (LEEVGAYFGVTRERIRQIEN) form a DNA-binding region, H-T-H motif.

This sequence belongs to the sigma-70 factor family. RpoD/SigA subfamily. In terms of assembly, interacts transiently with the RNA polymerase catalytic core formed by RpoA, RpoB, RpoC and RpoZ (2 alpha, 1 beta, 1 beta' and 1 omega subunit) to form the RNA polymerase holoenzyme that can initiate transcription.

It is found in the cytoplasm. Sigma factors are initiation factors that promote the attachment of RNA polymerase to specific initiation sites and are then released. This sigma factor is the primary sigma factor during exponential growth. The protein is RNA polymerase sigma factor SigA of Thermus aquaticus.